A 329-amino-acid polypeptide reads, in one-letter code: DNA-directed RNA polymerase subunit alpha (329 aa).

The tract at residues 1-234 (MQGSVTEFLK…EQLDAFVELR (234 aa)) is alpha N-terminal domain (alpha-NTD). The segment at 248-329 (FDPILLRPVD…WPPASLIDND (82 aa)) is alpha C-terminal domain (alpha-CTD).

This sequence belongs to the RNA polymerase alpha chain family. Homodimer. The RNAP catalytic core consists of 2 alpha, 1 beta, 1 beta' and 1 omega subunit. When a sigma factor is associated with the core the holoenzyme is formed, which can initiate transcription.

It catalyses the reaction RNA(n) + a ribonucleoside 5'-triphosphate = RNA(n+1) + diphosphate. Its function is as follows. DNA-dependent RNA polymerase catalyzes the transcription of DNA into RNA using the four ribonucleoside triphosphates as substrates. The sequence is that of DNA-directed RNA polymerase subunit alpha from Idiomarina loihiensis (strain ATCC BAA-735 / DSM 15497 / L2-TR).